A 592-amino-acid polypeptide reads, in one-letter code: Threonine dehydratase biosynthetic, chloroplastic (592 aa).

A chloroplast-targeting transit peptide spans 1–91 (MNSVQLPTAQ…NEAENGSIAE (91 aa)). Lys141 is modified (N6-(pyridoxal phosphate)lysine). 2 ACT-like domains span residues 419 to 490 (AVLA…NLTT) and 512 to 583 (VLCR…LVSD).

The protein belongs to the serine/threonine dehydratase family. Pyridoxal 5'-phosphate is required as a cofactor.

The protein localises to the plastid. The protein resides in the chloroplast. The enzyme catalyses L-threonine = 2-oxobutanoate + NH4(+). The protein operates within amino-acid biosynthesis; L-isoleucine biosynthesis; 2-oxobutanoate from L-threonine: step 1/1. Allosterically inhibited by isoleucine. Strain GM11b is isoleucine feedback insensitive and is resistant to the antimetabolite L-O-methylthreonine. In terms of biological role, catalyzes the formation of alpha-ketobutyrate from threonine in a two-step reaction. The first step is a dehydration of threonine, followed by rehydration and liberation of ammonia. The polypeptide is Threonine dehydratase biosynthetic, chloroplastic (OMR1) (Arabidopsis thaliana (Mouse-ear cress)).